The sequence spans 188 residues: Large ribosomal subunit protein uL5 (188 aa).

Belongs to the universal ribosomal protein uL5 family. Part of the 50S ribosomal subunit; contacts the 5S rRNA and probably tRNA. Forms a bridge to the 30S subunit in the 70S ribosome.

Functionally, this is one of the proteins that bind and probably mediate the attachment of the 5S RNA into the large ribosomal subunit, where it forms part of the central protuberance. In the 70S ribosome it contacts protein S13 of the 30S subunit (bridge B1b), connecting the 2 subunits; this bridge is implicated in subunit movement. May contact the P site tRNA; the 5S rRNA and some of its associated proteins might help stabilize positioning of ribosome-bound tRNAs. The chain is Large ribosomal subunit protein uL5 from Pyrococcus horikoshii (strain ATCC 700860 / DSM 12428 / JCM 9974 / NBRC 100139 / OT-3).